The following is a 68-amino-acid chain: Probable tautomerase jhp_0858 (68 aa).

P2 acts as the Proton acceptor; via imino nitrogen in catalysis.

It belongs to the 4-oxalocrotonate tautomerase family.

The chain is Probable tautomerase jhp_0858 from Helicobacter pylori (strain J99 / ATCC 700824) (Campylobacter pylori J99).